A 212-amino-acid chain; its full sequence is Acyl-homoserine-lactone synthase (212 aa).

This sequence belongs to the autoinducer synthase family.

The catalysed reaction is a fatty acyl-[ACP] + S-adenosyl-L-methionine = an N-acyl-L-homoserine lactone + S-methyl-5'-thioadenosine + holo-[ACP] + H(+). Its function is as follows. Required for the synthesis of autoinducer molecules which bind to RaiR and that are involved in the restriction of nodule number. The protein is Acyl-homoserine-lactone synthase (raiI) of Rhizobium etli.